The primary structure comprises 729 residues: MTMDQKTDNAGKCPVAHTAPRGRSNRDWWPDQLDVQVLHRHSDLSDPMGKSFNYAEEFRKLDLDALKRDLHALMTDSQDWWPADFGHYGGLFIRMAWHSAGTYRITDGRGGAGQGQQRFAPLNSWPDNANLDKARRLLWPIKQKYGNRISWADLLILTGNVALESMGFKTFGFAGGRTDVWEPEELFWGPEGTWLGDERYSGERQLSEPLAAVQMGLIYVNPEGPNGNPDPVAAAHDIRETFARMAMNDEETVALIAGGHTFGKTHGAGDPSFIGADPEGGAIEDQGLGWKSTFGTGVGKDAITGGPEVTWSQTPTRWSNYFFENLFNFEWELSKSPAGAHQWKAKNAEASVPDAYDATRKHVPTMLTTDLSLRFDPVYEKISRRFLENPDQFADAFARAWFKLTHRDMGPKVRYLGPEVPAEDLIWQDVIPPVDHELVDDADVAGLKAKILASSLSVQELVSTAWDSASTFRGSDKRGGANGARIRLAPQKDWEVNQPAQLARVLSVLEGIQRDFNASQAGGKKISLADLIVLAGNAGVEKAARAAGQEIIVPFTPGRMDASEAQTDAASFAALEPRADGFRNYVNSSRLQFMKPEEALVDRAQLLTLTAPEMTVLVGGLRVLKAGQPEHGVFTSRPEALTNDFFVNLLDMGTQWSPVEGKEGVYEGRDRKTGAARWTGTRVDLIFGSHSQLRAFAEVYAQTDAREKFVKDFVAAWTKVMNADRFDLV.

The segment at 1-26 is disordered; sequence MTMDQKTDNAGKCPVAHTAPRGRSNR. Residues 97–219 constitute a cross-link (tryptophyl-tyrosyl-methioninium (Trp-Tyr) (with M-245)); sequence WHSAGTYRIT…LAAVQMGLIY (123 aa). Catalysis depends on His-98, which acts as the Proton acceptor. A cross-link (tryptophyl-tyrosyl-methioninium (Tyr-Met) (with W-97)) is located at residues 219 to 245; that stretch reads YVNPEGPNGNPDPVAAAHDIRETFARM. Residue His-260 coordinates heme b.

This sequence belongs to the peroxidase family. Peroxidase/catalase subfamily. As to quaternary structure, homodimer or homotetramer. The cofactor is heme b. In terms of processing, formation of the three residue Trp-Tyr-Met cross-link is important for the catalase, but not the peroxidase activity of the enzyme.

It carries out the reaction H2O2 + AH2 = A + 2 H2O. The enzyme catalyses 2 H2O2 = O2 + 2 H2O. Its function is as follows. Bifunctional enzyme with both catalase and broad-spectrum peroxidase activity. The polypeptide is Catalase-peroxidase (Sinorhizobium medicae (strain WSM419) (Ensifer medicae)).